Reading from the N-terminus, the 347-residue chain is NADH-ubiquinone oxidoreductase chain 2 (347 aa).

11 helical membrane-spanning segments follow: residues 3 to 23 (PPILFTILLTVISGTMIVLMS), 25 to 45 (HWLMIWIGFEMNTLAIIPILM), 59 to 79 (YFLTQATASMILMMGITINLM), 96 to 116 (TMMTIALAMKLGLAPFHFWVP), 122 to 142 (VHMSSGLILLTWQKIAPLLVL), 149 to 169 (IDPNLLLPMAMMSVLIGGWGG), 178 to 198 (ILAYSSIAHMGWMATITLYNP), 200 to 220 (MMLLNLTIYIIMTLTTFMLFM), 242 to 262 (SLILMLMLSLGGLPPLSGFIP), 274 to 294 (EMIIMPTLLAITALLNLYFYM), and 323 to 343 (MILLPPLTVISTMLLPITPLL).

Belongs to the complex I subunit 2 family. Core subunit of respiratory chain NADH dehydrogenase (Complex I) which is composed of 45 different subunits. Interacts with TMEM242.

The protein localises to the mitochondrion inner membrane. The catalysed reaction is a ubiquinone + NADH + 5 H(+)(in) = a ubiquinol + NAD(+) + 4 H(+)(out). Its function is as follows. Core subunit of the mitochondrial membrane respiratory chain NADH dehydrogenase (Complex I) that is believed to belong to the minimal assembly required for catalysis. Complex I functions in the transfer of electrons from NADH to the respiratory chain. The immediate electron acceptor for the enzyme is believed to be ubiquinone. In Suricata suricatta (Meerkat), this protein is NADH-ubiquinone oxidoreductase chain 2.